The sequence spans 101 residues: Small ribosomal subunit protein uS14 (101 aa).

The protein belongs to the universal ribosomal protein uS14 family. In terms of assembly, part of the 30S ribosomal subunit. Contacts proteins S3 and S10.

Its function is as follows. Binds 16S rRNA, required for the assembly of 30S particles and may also be responsible for determining the conformation of the 16S rRNA at the A site. This is Small ribosomal subunit protein uS14 from Psychrobacter arcticus (strain DSM 17307 / VKM B-2377 / 273-4).